A 223-amino-acid polypeptide reads, in one-letter code: Thiamine-phosphate synthase (223 aa).

Residues 47–51 (QLRDK) and Asn-84 each bind 4-amino-2-methyl-5-(diphosphooxymethyl)pyrimidine. Mg(2+) contacts are provided by Asp-85 and Asp-104. A 4-amino-2-methyl-5-(diphosphooxymethyl)pyrimidine-binding site is contributed by Ser-123. Residue 150 to 152 (TPT) coordinates 2-[(2R,5Z)-2-carboxy-4-methylthiazol-5(2H)-ylidene]ethyl phosphate. Position 153 (Lys-153) interacts with 4-amino-2-methyl-5-(diphosphooxymethyl)pyrimidine. Gly-182 is a 2-[(2R,5Z)-2-carboxy-4-methylthiazol-5(2H)-ylidene]ethyl phosphate binding site.

Belongs to the thiamine-phosphate synthase family. It depends on Mg(2+) as a cofactor.

The catalysed reaction is 2-[(2R,5Z)-2-carboxy-4-methylthiazol-5(2H)-ylidene]ethyl phosphate + 4-amino-2-methyl-5-(diphosphooxymethyl)pyrimidine + 2 H(+) = thiamine phosphate + CO2 + diphosphate. The enzyme catalyses 2-(2-carboxy-4-methylthiazol-5-yl)ethyl phosphate + 4-amino-2-methyl-5-(diphosphooxymethyl)pyrimidine + 2 H(+) = thiamine phosphate + CO2 + diphosphate. It catalyses the reaction 4-methyl-5-(2-phosphooxyethyl)-thiazole + 4-amino-2-methyl-5-(diphosphooxymethyl)pyrimidine + H(+) = thiamine phosphate + diphosphate. It functions in the pathway cofactor biosynthesis; thiamine diphosphate biosynthesis; thiamine phosphate from 4-amino-2-methyl-5-diphosphomethylpyrimidine and 4-methyl-5-(2-phosphoethyl)-thiazole: step 1/1. Its function is as follows. Condenses 4-methyl-5-(beta-hydroxyethyl)thiazole monophosphate (THZ-P) and 2-methyl-4-amino-5-hydroxymethyl pyrimidine pyrophosphate (HMP-PP) to form thiamine monophosphate (TMP). This Saccharopolyspora erythraea (strain ATCC 11635 / DSM 40517 / JCM 4748 / NBRC 13426 / NCIMB 8594 / NRRL 2338) protein is Thiamine-phosphate synthase.